Reading from the N-terminus, the 93-residue chain is Small ribosomal subunit protein uS17 (93 aa).

It belongs to the universal ribosomal protein uS17 family. Part of the 30S ribosomal subunit.

Functionally, one of the primary rRNA binding proteins, it binds specifically to the 5'-end of 16S ribosomal RNA. The sequence is that of Small ribosomal subunit protein uS17 from Corynebacterium kroppenstedtii (strain DSM 44385 / JCM 11950 / CIP 105744 / CCUG 35717).